The primary structure comprises 208 residues: uncharacterized protein (208 aa).

2 disordered regions span residues 74 to 117 (FEYK…RDSP) and 181 to 208 (ESKLGSSEDSGTDRFSSNTSGSSGRKFK). Over residues 184 to 208 (LGSSEDSGTDRFSSNTSGSSGRKFK) the composition is skewed to polar residues.

This is an uncharacterized protein from Mus musculus (Mouse).